Here is an 870-residue protein sequence, read N- to C-terminus: Ribonucleoside-diphosphate reductase large subunit (870 aa).

One can recognise an ATP-cone domain in the interval 16–110 (MYVVKRDGTK…VSNLHKQTSK (95 aa)). Residues 20–21 (KR), 26–32 (ENVSFDK), Thr-71, and Asp-75 contribute to the ATP site. Ser-235 provides a ligand contact to GDP. The cysteines at positions 236 and 463 are disulfide-linked. DTTP is bound by residues 244-246 (DSI), Lys-261, Arg-274, and 281-282 (RG). Asn-446 provides a ligand contact to GDP. The active-site Proton acceptor is the Asn-446. Cys-448 acts as the Cysteine radical intermediate in catalysis. Residues Glu-450 and 632-635 (TAST) each bind GDP. The Proton acceptor role is filled by Glu-450. Residues 789-854 (KPVENNINST…NNNEDDLANY (66 aa)) are disordered. Positions 796–811 (NSTTPLKTPTKTPNSS) are enriched in low complexity. Over residues 812 to 831 (NRISTSPTNNLTSPIRFNIT) the composition is skewed to polar residues. Low complexity predominate over residues 832–844 (QQQQQQQQQQQQQ).

The protein belongs to the ribonucleoside diphosphate reductase large chain family. Heterodimer of a large and a small subunit.

It localises to the cytoplasm. It catalyses the reaction a 2'-deoxyribonucleoside 5'-diphosphate + [thioredoxin]-disulfide + H2O = a ribonucleoside 5'-diphosphate + [thioredoxin]-dithiol. Its activity is regulated as follows. Under complex allosteric control mediated by deoxynucleoside triphosphates and ATP binding to separate specificity and activation sites on the large subunit. The type of nucleotide bound at the specificity site determines substrate preference. It seems probable that ATP makes the enzyme reduce CDP and UDP, dGTP favors ADP reduction and dTTP favors GDP reduction. Stimulated by ATP and inhibited by dATP binding to the activity site. Provides the precursors necessary for DNA synthesis. Catalyzes the biosynthesis of deoxyribonucleotides from the corresponding ribonucleotides. The sequence is that of Ribonucleoside-diphosphate reductase large subunit (rnrA) from Dictyostelium discoideum (Social amoeba).